The following is a 165-amino-acid chain: Phosphopantetheine adenylyltransferase (165 aa).

Ser-10 serves as a coordination point for substrate. ATP contacts are provided by residues 10 to 11 (SF) and His-18. Lys-42, Thr-79, and Arg-93 together coordinate substrate. ATP is bound by residues 94–96 (GLR), Glu-104, and 129–135 (VRPITAT).

Belongs to the bacterial CoaD family. Homohexamer. Mg(2+) is required as a cofactor.

The protein localises to the cytoplasm. It carries out the reaction (R)-4'-phosphopantetheine + ATP + H(+) = 3'-dephospho-CoA + diphosphate. It functions in the pathway cofactor biosynthesis; coenzyme A biosynthesis; CoA from (R)-pantothenate: step 4/5. Its function is as follows. Reversibly transfers an adenylyl group from ATP to 4'-phosphopantetheine, yielding dephospho-CoA (dPCoA) and pyrophosphate. The chain is Phosphopantetheine adenylyltransferase from Rhodopseudomonas palustris (strain BisA53).